The sequence spans 481 residues: Aspartyl/glutamyl-tRNA(Asn/Gln) amidotransferase subunit B (481 aa).

This sequence belongs to the GatB/GatE family. GatB subfamily. As to quaternary structure, heterotrimer of A, B and C subunits.

The catalysed reaction is L-glutamyl-tRNA(Gln) + L-glutamine + ATP + H2O = L-glutaminyl-tRNA(Gln) + L-glutamate + ADP + phosphate + H(+). It carries out the reaction L-aspartyl-tRNA(Asn) + L-glutamine + ATP + H2O = L-asparaginyl-tRNA(Asn) + L-glutamate + ADP + phosphate + 2 H(+). Its function is as follows. Allows the formation of correctly charged Asn-tRNA(Asn) or Gln-tRNA(Gln) through the transamidation of misacylated Asp-tRNA(Asn) or Glu-tRNA(Gln) in organisms which lack either or both of asparaginyl-tRNA or glutaminyl-tRNA synthetases. The reaction takes place in the presence of glutamine and ATP through an activated phospho-Asp-tRNA(Asn) or phospho-Glu-tRNA(Gln). The sequence is that of Aspartyl/glutamyl-tRNA(Asn/Gln) amidotransferase subunit B from Cellvibrio japonicus (strain Ueda107) (Pseudomonas fluorescens subsp. cellulosa).